The primary structure comprises 346 residues: G-protein coupled receptor homolog U12 (346 aa).

The Extracellular portion of the chain corresponds to 1-31 (MICYSFAKNVTFAFLIILQNFFSQHDEEYKY). The chain crosses the membrane as a helical span at residues 32 to 56 (NYTCITPTVRKAQRLESVINGIMLT). The Cytoplasmic segment spans residues 57–83 (LILPVSTVVICTLLIYYKWTKQTITSP). The helical transmembrane segment at 84-108 (YLITLFISDSLHSLTVLLLTLNREA) threads the bilayer. Residues 109 to 115 (LTNLNQA) lie on the Extracellular side of the membrane. The chain crosses the membrane as a helical span at residues 116 to 142 (LCQCVLFVYSASCTYSLCMLAVISTIR). The Cytoplasmic segment spans residues 143-159 (YRTLQRRTLNDKNNNHI). The chain crosses the membrane as a helical span at residues 160–181 (KRNVGILFLSSAMCAIPAVLYV). Residues 182 to 208 (QVEKKKGNYGKCNIHISTQKAYDLFIG) are Extracellular-facing. A helical membrane pass occupies residues 209–229 (IKIVYCFLWGIFPTVIFSYFY). Topologically, residues 230-245 (VIFGKTLRALTQSKHN) are cytoplasmic. Residues 246 to 272 (KTLSFISLLILSFLCIQIPNLLVMSVE) form a helical membrane-spanning segment. Topologically, residues 273-286 (IFFLYIANTSCLGT) are extracellular. Residues 287–310 (IQREIVQIISRLMPEIHCLSNPLV) traverse the membrane as a helical segment. Residues 311-346 (YAFTRTDFRLRFYDFIKCNLCNSSLKRKRNPLTIKN) are Cytoplasmic-facing.

It belongs to the G-protein coupled receptor 1 family.

The protein localises to the host cell membrane. The sequence is that of G-protein coupled receptor homolog U12 (U12) from Homo sapiens (Human).